The primary structure comprises 121 residues: MARIAGINIPPQQHAEIGLTAIFGIGRTRARKICEACDIAYSKKIKDLTDGDLEKIRDQIALFTIEGDLRRETTMNIKRLMDIGCYRGFRHRRGLPMRGQRTRTNARTRKGPRKAAAALKK.

Positions 94–121 (GLPMRGQRTRTNARTRKGPRKAAAALKK) are disordered.

The protein belongs to the universal ribosomal protein uS13 family. In terms of assembly, part of the 30S ribosomal subunit. Forms a loose heterodimer with protein S19. Forms two bridges to the 50S subunit in the 70S ribosome.

In terms of biological role, located at the top of the head of the 30S subunit, it contacts several helices of the 16S rRNA. In the 70S ribosome it contacts the 23S rRNA (bridge B1a) and protein L5 of the 50S subunit (bridge B1b), connecting the 2 subunits; these bridges are implicated in subunit movement. Contacts the tRNAs in the A and P-sites. This Polaromonas sp. (strain JS666 / ATCC BAA-500) protein is Small ribosomal subunit protein uS13.